Consider the following 233-residue polypeptide: Forkhead box protein L3 (233 aa).

Positions 32–130 (RPAYSYIALI…ENGNYRRRRR (99 aa)) form a DNA-binding region, fork-head. The segment covering 125–134 (YRRRRRRRGP) has biased composition (basic residues). The disordered stretch occupies residues 125-198 (YRRRRRRRGP…PRDLKFSIDY (74 aa)). The segment covering 175-184 (REPPASPAPP) has biased composition (pro residues). Residues 185-194 (GKEHPRDLKF) are compositionally biased toward basic and acidic residues.

The protein localises to the nucleus. In terms of biological role, probable transcriptional regulator. The chain is Forkhead box protein L3 from Homo sapiens (Human).